We begin with the raw amino-acid sequence, 381 residues long: Creatine kinase M-type (381 aa).

In terms of domain architecture, Phosphagen kinase N-terminal spans 11-98 (KLNFKAEEEY…FDPIIQDRHG (88 aa)). The 243-residue stretch at 125-367 (YVLSSRVRTG…KLMVEMEKKL (243 aa)) folds into the Phosphagen kinase C-terminal domain. Residue 128–132 (SSRVR) participates in ATP binding. Ser-164 carries the phosphoserine modification. At Thr-166 the chain carries Phosphothreonine. Ser-178 is subject to Phosphoserine. Phosphothreonine is present on Thr-180. His-191 is an ATP binding site. Ser-199 is modified (phosphoserine). ATP contacts are provided by Arg-236 and Arg-292. A phosphothreonine mark is found at Thr-313 and Thr-322. ATP-binding positions include 320–325 (RGTGGV) and Asp-335. The residue at position 372 (Ser-372) is a Phosphoserine.

The protein belongs to the ATP:guanido phosphotransferase family. Dimer of identical or non-identical chains, which can be either B (brain type) or M (muscle type). With MM being the major form in skeletal muscle and myocardium, MB existing in myocardium, and BB existing in many tissues, especially brain.

The protein localises to the cytoplasm. It catalyses the reaction creatine + ATP = N-phosphocreatine + ADP + H(+). Reversibly catalyzes the transfer of phosphate between ATP and various phosphogens (e.g. creatine phosphate). Creatine kinase isoenzymes play a central role in energy transduction in tissues with large, fluctuating energy demands, such as skeletal muscle, heart, brain and spermatozoa. In Bos taurus (Bovine), this protein is Creatine kinase M-type (CKM).